The primary structure comprises 313 residues: Cytosolic Fe-S cluster assembly factor NUBP1 homolog (313 aa).

The tract at residues 1-25 (MSDVPEDANAGCPGTGSAGAGKASG) is disordered. Residues Cys-12, Cys-26, Cys-29, and Cys-35 each coordinate [4Fe-4S] cluster. An ATP-binding site is contributed by 66 to 73 (GKGGVGKS). [4Fe-4S] cluster-binding residues include Cys-240 and Cys-243.

Belongs to the Mrp/NBP35 ATP-binding proteins family. NUBP1/NBP35 subfamily. In terms of assembly, heterotetramer of 2 NUBP1 and 2 NUBP2 chains. The cofactor is [4Fe-4S] cluster.

Its subcellular location is the cytoplasm. The protein localises to the cell projection. Component of the cytosolic iron-sulfur (Fe/S) protein assembly (CIA) machinery. Required for maturation of extramitochondrial Fe-S proteins. The NUBP1-NUBP2 heterotetramer forms a Fe-S scaffold complex, mediating the de novo assembly of an Fe-S cluster and its transfer to target apoproteins. Regulates cilium formation and structure. This chain is Cytosolic Fe-S cluster assembly factor NUBP1 homolog, found in Caenorhabditis briggsae.